The primary structure comprises 391 residues: Casein kinase II subunit alpha (391 aa).

The tract at residues 36 to 41 (QDDYQL) is interaction with beta subunit. The region spanning 39–324 (YQLVRKLGRG…AREAMEHPYF (286 aa)) is the Protein kinase domain. ATP is bound by residues 45-53 (LGRGKYSEV) and Lys-68. Residue Asp-156 is the Proton acceptor of the active site. Thr-344 and Thr-360 each carry phosphothreonine; by CDK1. 2 positions are modified to phosphoserine; by CDK1: Ser-362 and Ser-370.

Belongs to the protein kinase superfamily. Ser/Thr protein kinase family. CK2 subfamily. Heterotetramer composed of two catalytic subunits (alpha chain and/or alpha' chain) and two regulatory subunits (beta chains). The tetramer can exist as a combination of 2 alpha/2 beta, 2 alpha'/2 beta or 1 alpha/1 alpha'/2 beta subunits. Also part of a CK2-SPT16-SSRP1 complex composed of SSRP1, SUPT16H, CSNK2A1, CSNK2A2 and CSNK2B, which forms following UV irradiation. Interacts with RNPS1. Interacts with SNAI1. Interacts with PML. Interacts with CCAR2. Interacts with HIRIP3. In terms of processing, phosphorylated at Thr-344, Thr-360, Ser-362 and Ser-370 by CDK1 in prophase and metaphase and dephosphorylated during anaphase. Phosphorylation does not directly affect casein kinase 2 activity, but may contribute to its regulation by forming binding sites for interacting proteins and/or targeting it to different compartments.

The protein resides in the nucleus. It carries out the reaction L-seryl-[protein] + ATP = O-phospho-L-seryl-[protein] + ADP + H(+). The catalysed reaction is L-threonyl-[protein] + ATP = O-phospho-L-threonyl-[protein] + ADP + H(+). Its activity is regulated as follows. Constitutively active protein kinase whose activity is not directly affected by phosphorylation. Seems to be regulated by level of expression and localization. Catalytic subunit of a constitutively active serine/threonine-protein kinase complex that phosphorylates a large number of substrates containing acidic residues C-terminal to the phosphorylated serine or threonine. Regulates numerous cellular processes, such as cell cycle progression, apoptosis and transcription, as well as viral infection. May act as a regulatory node which integrates and coordinates numerous signals leading to an appropriate cellular response. During mitosis, functions as a component of the p53/TP53-dependent spindle assembly checkpoint (SAC) that maintains cyclin-B-CDK1 activity and G2 arrest in response to spindle damage. Also required for p53/TP53-mediated apoptosis, phosphorylating 'Ser-392' of p53/TP53 following UV irradiation. Phosphorylates a number of DNA repair proteins in response to DNA damage, such as MDC1, MRE11, RAD9A, RAD51 and HTATSF1, promoting their recruitment to DNA damage sites. Can also negatively regulate apoptosis. Phosphorylates the caspases CASP9 and CASP2 and the apoptotic regulator NOL3. Phosphorylation protects CASP9 from cleavage and activation by CASP8, and inhibits the dimerization of CASP2 and activation of CASP8. Phosphorylates YY1, protecting YY1 from cleavage by CASP7 during apoptosis. Regulates transcription by direct phosphorylation of RNA polymerases I, II, III and IV. Also phosphorylates and regulates numerous transcription factors including NF-kappa-B, STAT1, CREB1, IRF1, IRF2, ATF1, ATF4, SRF, MAX, JUN, FOS, MYC and MYB. Phosphorylates Hsp90 and its co-chaperones FKBP4 and CDC37, which is essential for chaperone function. Mediates sequential phosphorylation of FNIP1, promoting its gradual interaction with Hsp90, leading to activate both kinase and non-kinase client proteins of Hsp90. Regulates Wnt signaling by phosphorylating CTNNB1 and the transcription factor LEF1. Acts as an ectokinase that phosphorylates several extracellular proteins. Phosphorylates PML at 'Ser-565' and primes it for ubiquitin-mediated degradation. Plays an important role in the circadian clock function by phosphorylating BMAL1 at 'Ser-90' which is pivotal for its interaction with CLOCK and which controls CLOCK nuclear entry. Phosphorylates FMR1, promoting FMR1-dependent formation of a membraneless compartment. May phosphorylate histone H2A on 'Ser-1'. In Mus musculus (Mouse), this protein is Casein kinase II subunit alpha (Csnk2a1).